We begin with the raw amino-acid sequence, 324 residues long: MTASELVAGDLAGGRAPGALPLDTTWHRPGWTIGELEAAKAGRTISVVLPALNEEATIESVIDSISPLVDGLVDELIVLDSGSTDDTEIRAIASGARVVSREQALPEVPVRPGKGEALWRSLAATSGDIVVFIDSDLINPHPLFVPWLVGPLLTGEGIQLVKSFYRRPLQVSDVTSGVCATGGGRVTELVARPLLAALRPELGCVLQPLSGEYAASRELLTSLPFAPGYGVEIGLLIDTFDRLGLDAIAQVNLGVRAHRNRPLDELGAMSRQVIATLLSRCGIPDSGVGLTQFLPGGPDDSDYTRHTWPVSLVDRPPMKVMRPR.

UDP-alpha-D-glucose is bound by residues 50-54 (PALNE), Ser-81, Lys-114, and 134-135 (DS). Asp-136 is a Mn(2+) binding site. Residue 184–187 (GRVT) participates in (2R)-3-phosphoglycerate binding. Residues 229 to 232 (YGVE) and 256 to 261 (RAHRNR) contribute to the UDP-alpha-D-glucose site. Mn(2+) is bound at residue His-258. (2R)-3-phosphoglycerate is bound at residue Asn-260.

This sequence belongs to the glycosyltransferase 2 family. Homotrimer. The cofactor is Mg(2+). Mn(2+) is required as a cofactor.

The enzyme catalyses an NDP-alpha-D-glucose + (2R)-3-phosphoglycerate = (2R)-2-O-(alpha-D-glucopyranosyl)-3-phospho-glycerate + a ribonucleoside 5'-diphosphate + H(+). It carries out the reaction (2R)-3-phosphoglycerate + UDP-alpha-D-glucose = (2R)-2-O-(alpha-D-glucopyranosyl)-3-phospho-glycerate + UDP + H(+). The catalysed reaction is ADP-alpha-D-glucose + (2R)-3-phosphoglycerate = (2R)-2-O-(alpha-D-glucopyranosyl)-3-phospho-glycerate + ADP + H(+). It catalyses the reaction GDP-D-glucose + (2R)-3-phosphoglycerate = (2R)-2-O-(alpha-D-glucopyranosyl)-3-phospho-glycerate + GDP + H(+). Functionally, involved in the biosynthesis of 6-O-methylglucose lipopolysaccarides (MGLPs). Catalyzes the transfer of the glucose moiety from a nuleotide sugar such as UDP-alpha-D-glucose to the position 2 of 3-phospho-D-glycerate (3-PGA) to form glucosyl-3-phosphoglycerate (GPG). It can use UDP-glucose, ADP-glucose and GDP-glucose as sugar donor substrates with decreasing affinity and with 3-PGA as an acceptor. D-glycerate can only be an acceptor with ADP-glucose and at a very low rate. This chain is Glucosyl-3-phosphoglycerate synthase (gpgS), found in Mycobacterium bovis (strain ATCC BAA-935 / AF2122/97).